The following is a 487-amino-acid chain: Serine/threonine-protein kinase 4 (487 aa).

N-acetylmethionine is present on methionine 1. Threonine 3 bears the Phosphothreonine mark. In terms of domain architecture, Protein kinase spans 30–281 (FDVLEKLGEG…ATQLLQHPFV (252 aa)). Residues 36 to 44 (LGEGSYGSV) and lysine 59 contribute to the ATP site. Aspartate 149 functions as the Proton acceptor in the catalytic mechanism. A Phosphothreonine; by autocatalysis modification is found at threonine 183. Serine 265 carries the post-translational modification Phosphoserine. Positions 290 to 310 (LRDLINEAMDVKLKRQESQQR) form a coiled coil. Residues 303 to 312 (KRQESQQREV) are compositionally biased toward basic and acidic residues. The tract at residues 303–332 (KRQESQQREVDQDDEENSEEDEMDSGTMVR) is disordered. The span at 313–326 (DQDDEENSEEDEMD) shows a compositional bias: acidic residues. Serine 320 carries the phosphoserine modification. Phosphothreonine is present on residues threonine 340 and threonine 367. Phosphothreonine; by PKB/AKT1 is present on threonine 387. Serine 410 and serine 414 each carry phosphoserine. Residue tyrosine 433 is modified to Phosphotyrosine. Residues 433 to 480 (YEFLKSWTVEDLQKRLLALDPMMEQEIEEIRQKYQSKRQPILDAIEAK) form the SARAH domain.

This sequence belongs to the protein kinase superfamily. STE Ser/Thr protein kinase family. STE20 subfamily. In terms of assembly, homodimer; mediated via the coiled-coil region. Interacts with NORE1, which inhibits autoactivation. Interacts with and stabilizes SAV1. Interacts with RASSF1. Interacts with FOXO3. Interacts with RASSF2 (via SARAH domain). Interacts with AR, PKB/AKT1, TNNI3 and SIRT1. Interacts with DLG5 (via PDZ domain 3). Interacts with MARK3 in the presence of DLG5. Interacts with SCRIB in the presence of DLG5. Mg(2+) is required as a cofactor. In terms of processing, autophosphorylated on serine and threonine residues. Phosphorylation at Thr-387 by PKB/AKT1, leads to inhibition of its: kinase activity, nuclear translocation and autophosphorylation at Thr-183. It also diminishes its cleavage by caspases and its ability to phosphorylate FOXO3. Post-translationally, proteolytically cleaved by caspase-3 during apoptosis at Asp-326 and Asp-349 resulting in a 37 kDa or a 39 kDa subunit respectively. The 39 kDa subunit is further cleaved into the 37 kDa form. Proteolytic cleavage results in kinase activation and nuclear translocation of the truncated form (MST1/N). It is less likely that cleavage at Asp-349 is a prerequisite for activation as this site is not conserved in the murine ortholog. Expressed in prostate cancer and levels increase from the normal to the malignant state (at protein level). Ubiquitously expressed.

The protein resides in the cytoplasm. It localises to the nucleus. The catalysed reaction is L-seryl-[protein] + ATP = O-phospho-L-seryl-[protein] + ADP + H(+). It carries out the reaction L-threonyl-[protein] + ATP = O-phospho-L-threonyl-[protein] + ADP + H(+). Its activity is regulated as follows. Inhibited by the C-terminal non-catalytic region. Activated by caspase-cleavage. Full activation also requires homodimerization and autophosphorylation of Thr-183. Activated by RASSF1 which acts by preventing its dephosphorylation. In terms of biological role, stress-activated, pro-apoptotic kinase which, following caspase-cleavage, enters the nucleus and induces chromatin condensation followed by internucleosomal DNA fragmentation. Key component of the Hippo signaling pathway which plays a pivotal role in organ size control and tumor suppression by restricting proliferation and promoting apoptosis. The core of this pathway is composed of a kinase cascade wherein STK3/MST2 and STK4/MST1, in complex with its regulatory protein SAV1, phosphorylates and activates LATS1/2 in complex with its regulatory protein MOB1, which in turn phosphorylates and inactivates YAP1 oncoprotein and WWTR1/TAZ. Phosphorylation of YAP1 by LATS2 inhibits its translocation into the nucleus to regulate cellular genes important for cell proliferation, cell death, and cell migration. STK3/MST2 and STK4/MST1 are required to repress proliferation of mature hepatocytes, to prevent activation of facultative adult liver stem cells (oval cells), and to inhibit tumor formation. Phosphorylates 'Ser-14' of histone H2B (H2BS14ph) during apoptosis. Phosphorylates FOXO3 upon oxidative stress, which results in its nuclear translocation and cell death initiation. Phosphorylates MOBKL1A, MOBKL1B and RASSF2. Phosphorylates TNNI3 (cardiac Tn-I) and alters its binding affinity to TNNC1 (cardiac Tn-C) and TNNT2 (cardiac Tn-T). Phosphorylates FOXO1 on 'Ser-212' and regulates its activation and stimulates transcription of PMAIP1 in a FOXO1-dependent manner. Phosphorylates SIRT1 and inhibits SIRT1-mediated p53/TP53 deacetylation, thereby promoting p53/TP53 dependent transcription and apoptosis upon DNA damage. Acts as an inhibitor of PKB/AKT1. Phosphorylates AR on 'Ser-650' and suppresses its activity by intersecting with PKB/AKT1 signaling and antagonizing formation of AR-chromatin complexes. This Homo sapiens (Human) protein is Serine/threonine-protein kinase 4.